The chain runs to 436 residues: tRNA(Ile)-lysidine synthase (436 aa).

21–26 (SGGVDS) lines the ATP pocket.

This sequence belongs to the tRNA(Ile)-lysidine synthase family.

The protein resides in the cytoplasm. It carries out the reaction cytidine(34) in tRNA(Ile2) + L-lysine + ATP = lysidine(34) in tRNA(Ile2) + AMP + diphosphate + H(+). In terms of biological role, ligates lysine onto the cytidine present at position 34 of the AUA codon-specific tRNA(Ile) that contains the anticodon CAU, in an ATP-dependent manner. Cytidine is converted to lysidine, thus changing the amino acid specificity of the tRNA from methionine to isoleucine. The chain is tRNA(Ile)-lysidine synthase from Aster yellows witches'-broom phytoplasma (strain AYWB).